The following is a 252-amino-acid chain: Chitooligosaccharide deacetylase (252 aa).

Mg(2+) is bound by residues H61 and H125.

This sequence belongs to the YdjC deacetylase family. ChbG subfamily. Homodimer. Mg(2+) serves as cofactor.

It is found in the cytoplasm. It carries out the reaction N,N'-diacetylchitobiose + H2O = N-acetyl-beta-D-glucosaminyl-(1-&gt;4)-D-glucosamine + acetate. The catalysed reaction is diacetylchitobiose-6'-phosphate + H2O = N'-monoacetylchitobiose-6'-phosphate + acetate. It functions in the pathway glycan degradation; chitin degradation. In terms of biological role, involved in the degradation of chitin. ChbG is essential for growth on the acetylated chitooligosaccharides chitobiose and chitotriose but is dispensable for growth on cellobiose and chitosan dimer, the deacetylated form of chitobiose. Deacetylation of chitobiose-6-P and chitotriose-6-P is necessary for both the activation of the chb promoter by the regulatory protein ChbR and the hydrolysis of phosphorylated beta-glucosides by the phospho-beta-glucosidase ChbF. Catalyzes the removal of only one acetyl group from chitobiose-6-P to yield monoacetylchitobiose-6-P, the inducer of ChbR and the substrate of ChbF. This Salmonella newport (strain SL254) protein is Chitooligosaccharide deacetylase.